A 267-amino-acid polypeptide reads, in one-letter code: MIATIRVVVTGAAGRMGREMTRGLLQTEDIAVVGAVDRREVGVDIGSLNGLPPAGVIIQEDLAGVIASARPEVMVDFTVAAAALANARLAVEQGVSPVIGTTGISLERLDELHQLCEARQVGAVVAPNFSLGAILMMHFAEEAARYFPRAEIIEIHHDQKIDAPSGTALKTAELMAARVNRPLTPSPAEEKVAGARGATYQGLAVHSVRLPGAVAHQEVIFGGQGQLLTIRHDTTSREAFLPGLLLAIKKVRQLKGVVYGLENLLEF.

An NAD(+)-binding site is contributed by 11–16 (GAAGRM). NADP(+) is bound at residue Arg-39. NAD(+)-binding positions include 100-102 (GTT) and 126-129 (APNF). His-156 serves as the catalytic Proton donor/acceptor. A (S)-2,3,4,5-tetrahydrodipicolinate-binding site is contributed by His-157. The active-site Proton donor is Lys-160. 166-167 (GT) provides a ligand contact to (S)-2,3,4,5-tetrahydrodipicolinate.

Belongs to the DapB family.

The protein localises to the cytoplasm. It carries out the reaction (S)-2,3,4,5-tetrahydrodipicolinate + NAD(+) + H2O = (2S,4S)-4-hydroxy-2,3,4,5-tetrahydrodipicolinate + NADH + H(+). It catalyses the reaction (S)-2,3,4,5-tetrahydrodipicolinate + NADP(+) + H2O = (2S,4S)-4-hydroxy-2,3,4,5-tetrahydrodipicolinate + NADPH + H(+). Its pathway is amino-acid biosynthesis; L-lysine biosynthesis via DAP pathway; (S)-tetrahydrodipicolinate from L-aspartate: step 4/4. Its function is as follows. Catalyzes the conversion of 4-hydroxy-tetrahydrodipicolinate (HTPA) to tetrahydrodipicolinate. The chain is 4-hydroxy-tetrahydrodipicolinate reductase from Moorella thermoacetica (strain ATCC 39073 / JCM 9320).